Here is a 681-residue protein sequence, read N- to C-terminus: Type VI secretion system spike protein VgrG1 (681 aa).

Residues 621–640 (NSGGSPSSGSGWGGKSPVDP) form a disordered region.

It belongs to the VgrG protein family.

It is found in the secreted. It catalyses the reaction L-arginyl-[protein] + NAD(+) = N(omega)-(ADP-D-ribosyl)-L-arginyl-[protein] + nicotinamide + H(+). Its function is as follows. Part of the type VI secretion system specialized secretion system, which delivers several virulence factors in both prokaryotic and eukaryotic cells during infection. Acts directly as an secreted effector with an actin ADP-ribosyltransferase activity that disrupts the host actin cytoskeleton, leading to a decrease in host cell viability and an increase in apoptosis. This Aeromonas hydrophila protein is Type VI secretion system spike protein VgrG1 (vgrG1).